The chain runs to 165 residues: Endoribonuclease YbeY (165 aa).

3 residues coordinate Zn(2+): His130, His134, and His140.

The protein belongs to the endoribonuclease YbeY family. Zn(2+) is required as a cofactor.

Its subcellular location is the cytoplasm. In terms of biological role, single strand-specific metallo-endoribonuclease involved in late-stage 70S ribosome quality control and in maturation of the 3' terminus of the 16S rRNA. In Streptococcus pneumoniae serotype 2 (strain D39 / NCTC 7466), this protein is Endoribonuclease YbeY.